The following is a 712-amino-acid chain: Cyclolysin secretion/processing ATP-binding protein CyaB (712 aa).

Positions 7–128 constitute a Peptidase C39 domain; it reads QCASVPDSGL…ALWAGELLLC (122 aa). The region spanning 157–439 is the ABC transmembrane type-1 domain; sequence IGEVLLISLV…LAQLWNDFQQ (283 aa). 6 consecutive transmembrane segments (helical) span residues 160–180, 194–214, 272–292, 298–318, 367–387, and 390–410; these read VLLI…FFQV, LNVI…LTGI, AVTV…MFFY, LVVL…TPVL, VAAG…VTLI, and LVAL…RMTV. The region spanning 471-706 is the ABC transporter domain; it reads IELDRVSFRY…GGLYARLQAL (236 aa). Residue 505–512 participates in ATP binding; it reads GRSGSGKS.

It belongs to the ABC transporter superfamily. Cyclolysin exporter (TC 3.A.1.109.2) family.

The protein resides in the cell membrane. Its function is as follows. Involved in the export of calmodulin-sensitive adenylate cyclase-hemolysin (cyclolysin). The polypeptide is Cyclolysin secretion/processing ATP-binding protein CyaB (cyaB) (Bordetella pertussis (strain ATCC 9797 / DSM 5571 / CCUG 30873 / LMG 14455 / NCTC 10739 / 18323)).